The following is a 228-amino-acid chain: Lipoprotein-releasing system ATP-binding protein LolD (228 aa).

The region spanning 6-228 (IKCINLNKSY…ENNQIFNYES (223 aa)) is the ABC transporter domain. 42–49 (GKSGSGKT) is an ATP binding site.

The protein belongs to the ABC transporter superfamily. Lipoprotein translocase (TC 3.A.1.125) family.

It localises to the cell inner membrane. Functionally, usually LolD forms an ABC transporter complex with LolC and LolE involved in the translocation of lipoprotein, in an ATP-dependent manner. However, LolE is certainly not functional as it is frameshifted. In Buchnera aphidicola subsp. Acyrthosiphon pisum (strain APS) (Acyrthosiphon pisum symbiotic bacterium), this protein is Lipoprotein-releasing system ATP-binding protein LolD.